A 154-amino-acid polypeptide reads, in one-letter code: Low molecular weight protein-tyrosine-phosphatase PtpA (154 aa).

The Nucleophile role is filled by C8. Residue R14 is part of the active site. D120 serves as the catalytic Proton donor.

It belongs to the low molecular weight phosphotyrosine protein phosphatase family.

It catalyses the reaction O-phospho-L-tyrosyl-[protein] + H2O = L-tyrosyl-[protein] + phosphate. Dephosphorylates the phosphotyrosine-containing proteins. In Staphylococcus saprophyticus subsp. saprophyticus (strain ATCC 15305 / DSM 20229 / NCIMB 8711 / NCTC 7292 / S-41), this protein is Low molecular weight protein-tyrosine-phosphatase PtpA (ptpA).